The following is a 273-amino-acid chain: tRNA (guanine-N(7)-)-methyltransferase (273 aa).

A compositionally biased stretch (polar residues) spans 1 to 31 (MSQHPDINTNVDATSLTDDQKSLDTNATSGN). Residues 1 to 36 (MSQHPDINTNVDATSLTDDQKSLDTNATSGNEVAPD) are disordered. 4 residues coordinate S-adenosyl-L-methionine: Glu105, Glu130, Asp157, and Asp179. Residue Asp179 is part of the active site. Residues Lys183, Asp215, and 252-255 (TKFE) contribute to the substrate site.

Belongs to the class I-like SAM-binding methyltransferase superfamily. TrmB family.

It carries out the reaction guanosine(46) in tRNA + S-adenosyl-L-methionine = N(7)-methylguanosine(46) in tRNA + S-adenosyl-L-homocysteine. Its pathway is tRNA modification; N(7)-methylguanine-tRNA biosynthesis. Catalyzes the formation of N(7)-methylguanine at position 46 (m7G46) in tRNA. In Psychrobacter cryohalolentis (strain ATCC BAA-1226 / DSM 17306 / VKM B-2378 / K5), this protein is tRNA (guanine-N(7)-)-methyltransferase.